Consider the following 257-residue polypeptide: uncharacterized protein (257 aa).

Disordered regions lie at residues 86 to 119 (SDEE…RPLS) and 182 to 206 (STPL…TDGQ). The span at 196 to 206 (PTPTSQLTDGQ) shows a compositional bias: polar residues.

This is an uncharacterized protein from Invertebrate iridescent virus 3 (IIV-3).